Reading from the N-terminus, the 209-residue chain is Tektin bundle-interacting protein 1 (209 aa).

Microtubule inner protein component of sperm flagellar doublet microtubules.

The protein resides in the cytoplasm. It is found in the cytoskeleton. It localises to the cilium axoneme. Its subcellular location is the flagellum axoneme. Microtubule inner protein (MIP) part of the dynein-decorated doublet microtubules (DMTs) in cilia axoneme, which is required for motile cilia beating. Located at the center of the tektin bundle where may function to recruit tektins or stabilize the bundle. The protein is Tektin bundle-interacting protein 1 of Homo sapiens (Human).